The primary structure comprises 304 residues: Homoserine kinase (304 aa).

90–100 is a binding site for ATP; that stretch reads PLARGLGSSAS.

This sequence belongs to the GHMP kinase family. Homoserine kinase subfamily.

It localises to the cytoplasm. It carries out the reaction L-homoserine + ATP = O-phospho-L-homoserine + ADP + H(+). It functions in the pathway amino-acid biosynthesis; L-threonine biosynthesis; L-threonine from L-aspartate: step 4/5. In terms of biological role, catalyzes the ATP-dependent phosphorylation of L-homoserine to L-homoserine phosphate. In Staphylococcus aureus (strain MRSA252), this protein is Homoserine kinase.